Here is a 118-residue protein sequence, read N- to C-terminus: Class I hydrophobin 1 (118 aa).

Residues 1–20 (MFARLSTALLAFTLATAVVA) form the signal peptide. Cystine bridges form between cysteine 34–cysteine 97, cysteine 41–cysteine 91, cysteine 42–cysteine 77, and cysteine 98–cysteine 111. The N-linked (GlcNAc...) asparagine glycan is linked to asparagine 54. An N-linked (GlcNAc...) asparagine glycan is attached at asparagine 115.

Belongs to the fungal hydrophobin family. Self-assembles to form functional amyloid fibrils called rodlets. Self-assembly into fibrillar rodlets occurs spontaneously at hydrophobic:hydrophilic interfaces and the rodlets further associate laterally to form amphipathic monolayers.

The protein localises to the secreted. The protein resides in the cell wall. Its function is as follows. Aerial growth, conidiation, and dispersal of filamentous fungi in the environment rely upon a capability of their secreting small amphipathic proteins called hydrophobins (HPBs) with low sequence identity. Class I can self-assemble into an outermost layer of rodlet bundles on aerial cell surfaces, conferring cellular hydrophobicity that supports fungal growth, development and dispersal; whereas Class II form highly ordered films at water-air interfaces through intermolecular interactions but contribute nothing to the rodlet structure. This chain is Class I hydrophobin 1, found in Coprinopsis cinerea (strain Okayama-7 / 130 / ATCC MYA-4618 / FGSC 9003) (Inky cap fungus).